The primary structure comprises 818 residues: LisH domain-containing protein ARMC9 (818 aa).

One can recognise a LisH domain in the interval 7–39 (HESELLGLVKEYLDFAEFEDTLKTFSKECKIKG). The stretch at 204–230 (QSNKEILQQLHQQLVEAERRSVTYLKR) forms a coiled coil. Phosphoserine is present on Ser582. Disordered stretches follow at residues 642–755 (VQWS…TTRE) and 790–818 (SSCGPQQASRPGSTASSTRGLPSSQSHRK). Low complexity predominate over residues 701–711 (STPESCVSSSS). Positions 792 to 818 (CGPQQASRPGSTASSTRGLPSSQSHRK) are enriched in polar residues.

As to quaternary structure, interacts with TOGARAM1, CCDC66, CEP104, CSPP1 and CEP290. Interacts with NDUFAF2. In terms of tissue distribution, strongly expressed in most melanomas and melanocytes. Weakly expressed in the testis.

The protein localises to the cytoplasm. Its subcellular location is the cytoskeleton. It is found in the cilium basal body. It localises to the cell projection. The protein resides in the cilium. The protein localises to the microtubule organizing center. Its subcellular location is the centrosome. It is found in the centriole. Functionally, involved in ciliogenesis. It is required for appropriate acetylation and polyglutamylation of ciliary microtubules, and regulation of cilium length. Acts as a positive regulator of hedgehog (Hh)signaling. May participate in the trafficking and/or retention of GLI2 and GLI3 proteins at the ciliary tip. In Homo sapiens (Human), this protein is LisH domain-containing protein ARMC9.